A 231-amino-acid polypeptide reads, in one-letter code: Chromosome partition protein MukE (231 aa).

Positions 197 to 231 (RDGEAMPIEGGLSLDDSENDETSDNSAEGTGDEQP) are disordered.

The protein belongs to the MukE family. In terms of assembly, interacts, and probably forms a ternary complex, with MukF and MukB. The complex formation is stimulated by calcium or magnesium.

The protein resides in the cytoplasm. It localises to the nucleoid. Involved in chromosome condensation, segregation and cell cycle progression. May participate in facilitating chromosome segregation by condensation DNA from both sides of a centrally located replisome during cell division. Probably acts via its interaction with MukB and MukF. The polypeptide is Chromosome partition protein MukE (Photorhabdus laumondii subsp. laumondii (strain DSM 15139 / CIP 105565 / TT01) (Photorhabdus luminescens subsp. laumondii)).